An 88-amino-acid polypeptide reads, in one-letter code: Small ribosomal subunit protein uS19 (88 aa).

The protein belongs to the universal ribosomal protein uS19 family.

Protein S19 forms a complex with S13 that binds strongly to the 16S ribosomal RNA. The chain is Small ribosomal subunit protein uS19 from Chlamydia caviae (strain ATCC VR-813 / DSM 19441 / 03DC25 / GPIC) (Chlamydophila caviae).